A 298-amino-acid polypeptide reads, in one-letter code: Deoxyuridine 5'-triphosphate nucleotidohydrolase (298 aa).

Position 180 to 182 (180 to 182 (RSG)) interacts with substrate.

This sequence belongs to the dUTPase family. Requires Mg(2+) as cofactor.

It catalyses the reaction dUTP + H2O = dUMP + diphosphate + H(+). In terms of biological role, involved in nucleotide metabolism: produces dUMP, the immediate precursor of thymidine nucleotides and decreases the intracellular concentration of dUTP to avoid uracil incorporation into viral DNA. This Alcelaphine herpesvirus 1 (strain C500) (AlHV-1) protein is Deoxyuridine 5'-triphosphate nucleotidohydrolase.